A 108-amino-acid chain; its full sequence is UPF0145 protein ACIAD2946 (108 aa).

Belongs to the UPF0145 family.

The sequence is that of UPF0145 protein ACIAD2946 from Acinetobacter baylyi (strain ATCC 33305 / BD413 / ADP1).